A 225-amino-acid polypeptide reads, in one-letter code: 2-amino-5-formylamino-6-ribosylaminopyrimidin-4(3H)-one 5'-monophosphate deformylase (225 aa).

Residues E28, H30, D39, and H107 each contribute to the Fe cation site.

Belongs to the creatininase superfamily. FAPy deformylase family. In terms of assembly, homodimer. Fe(2+) serves as cofactor. It depends on Zn(2+) as a cofactor.

It carries out the reaction 2-amino-5-formylamino-6-(5-phospho-D-ribosylamino)pyrimidin-4(3H)-one + H2O = 2,5-diamino-6-(1-D-ribosylamino)pyrimidin-4(3H)-one 5'-phosphate + formate + H(+). It participates in cofactor biosynthesis; coenzyme F420 biosynthesis. Its pathway is cofactor biosynthesis; riboflavin biosynthesis. Functionally, catalyzes the hydrolysis of the formamide of 2-amino-5-formylamino-6-ribosylamino-4(3H)-pyrimidinone 5'-monophosphate (FAPy) to form 2,5-diamino-6-ribosylamino-4(3H)-pyrimidinone 5'-phosphate (APy). The sequence is that of 2-amino-5-formylamino-6-ribosylaminopyrimidin-4(3H)-one 5'-monophosphate deformylase from Methanocaldococcus sp. (strain FS406-22).